The primary structure comprises 454 residues: Glutamyl-tRNA(Gln) amidotransferase subunit A (454 aa).

Active-site charge relay system residues include K56 and S131. S155 functions as the Acyl-ester intermediate in the catalytic mechanism.

The protein belongs to the amidase family. GatA subfamily. As to quaternary structure, heterotrimer of A, B and C subunits.

It carries out the reaction L-glutamyl-tRNA(Gln) + L-glutamine + ATP + H2O = L-glutaminyl-tRNA(Gln) + L-glutamate + ADP + phosphate + H(+). Its function is as follows. Allows the formation of correctly charged Gln-tRNA(Gln) through the transamidation of misacylated Glu-tRNA(Gln) in organisms which lack glutaminyl-tRNA synthetase. The reaction takes place in the presence of glutamine and ATP through an activated gamma-phospho-Glu-tRNA(Gln). This Campylobacter lari (strain RM2100 / D67 / ATCC BAA-1060) protein is Glutamyl-tRNA(Gln) amidotransferase subunit A.